Consider the following 349-residue polypeptide: tRNA pseudouridine synthase D (349 aa).

Phe-27 contacts substrate. Asp-80 acts as the Nucleophile in catalysis. A substrate-binding site is contributed by Asn-129. A TRUD domain is found at 155 to 303 (GVPNYFGAQR…VEAARRAMLL (149 aa)). Phe-329 contributes to the substrate binding site.

This sequence belongs to the pseudouridine synthase TruD family.

The enzyme catalyses uridine(13) in tRNA = pseudouridine(13) in tRNA. Functionally, responsible for synthesis of pseudouridine from uracil-13 in transfer RNAs. This Escherichia coli (strain SMS-3-5 / SECEC) protein is tRNA pseudouridine synthase D.